The following is a 698-amino-acid chain: Transcription factor cwo (698 aa).

A basic motif; degenerate region spans residues 62–75 (QDPLSHRIIEKRRR). The 56-residue stretch at 62 to 117 (QDPLSHRIIEKRRRDRMNSCLADLSRLIPPQYQRKGRGRIEKTEIIEMAIRHLKHL) folds into the bHLH domain. The segment at 76–117 (DRMNSCLADLSRLIPPQYQRKGRGRIEKTEIIEMAIRHLKHL) is helix-loop-helix motif. Residues 128-159 (YRSGYMDCMKEAAKFLYDVHMQDFCHRLLGRL) form the Orange domain. 2 disordered regions span residues 257 to 319 (SSPA…ASST) and 349 to 369 (STAP…FESS). Residues 280–318 (APPAADNVPSNSTGSGSAAACAGGNSNSSGSNSSNAASS) are compositionally biased toward low complexity. Residues 359 to 369 (TDSSHHDFESS) are compositionally biased toward basic and acidic residues.

As to expression, expressed in adult brain where it is detected in the dorsal lateral neurons, small and large ventral lateral neurons and dorsal neurons 1, 2 and 3 (at protein level). Expressed at constant levels in a 12 hour light / 12 hour day cycle (at protein level). Strongly expressed in pacemaker neurons. In adults, mRNA expression oscillates in a circadian manner with a peak at around 14 hour Zeitgeber time. mRNA levels oscillate in a rhythmic manner in both 12 hour light / 12 hour dark and constant dark conditions with a morning peak around the time of lights-on and an evening peak around the time of lights-off in light/dark conditions. During stage 8 of embryonic development, expressed in the anterior and posterior midgut primordia and expression in the gut continues throughout embryonic development. During germ band retraction, expression is initiated in many tissues in a prominent segmentally repeated pattern. Later, expression is ubiquitous but has higher levels in segmentally repeated clusters of cells. Expression is also found in cells of the amnioserosa, in the head region, in posterior spiracles and in tracheal trees.

The protein localises to the nucleus. In terms of biological role, plays a role in the regulation of circadian rhythms. Transcriptional repressor which inhibits Clock-mediated transcriptional activation by binding to E boxes in the promoters of Clock target genes and repressing their transcription. E box binding activity is time-dependent with higher binding activity seen in the early morning (zeitgeber time 2) than early evening (zeitgeber time 14) and is dependent on the presence of the circadian protein per. It is likely that per binds to Clock-cycle heterodimers, reducing their affinity for E box binding and allowing cwo to bind instead. Negatively regulates its own expression. This is Transcription factor cwo from Drosophila melanogaster (Fruit fly).